Consider the following 90-residue polypeptide: Small ribosomal subunit protein bS16 (90 aa).

Belongs to the bacterial ribosomal protein bS16 family.

This Oceanobacillus iheyensis (strain DSM 14371 / CIP 107618 / JCM 11309 / KCTC 3954 / HTE831) protein is Small ribosomal subunit protein bS16.